The sequence spans 279 residues: DNA repair protein RecO (279 aa).

Belongs to the RecO family.

In terms of biological role, involved in DNA repair and RecF pathway recombination. The sequence is that of DNA repair protein RecO from Thermosynechococcus vestitus (strain NIES-2133 / IAM M-273 / BP-1).